The sequence spans 290 residues: 33 kDa chaperonin (290 aa).

Disulfide bonds link C235-C237 and C268-C271.

Belongs to the HSP33 family. In terms of processing, under oxidizing conditions two disulfide bonds are formed involving the reactive cysteines. Under reducing conditions zinc is bound to the reactive cysteines and the protein is inactive.

It localises to the cytoplasm. In terms of biological role, redox regulated molecular chaperone. Protects both thermally unfolding and oxidatively damaged proteins from irreversible aggregation. Plays an important role in the bacterial defense system toward oxidative stress. This is 33 kDa chaperonin from Streptococcus pyogenes serotype M2 (strain MGAS10270).